The primary structure comprises 359 residues: Type-1 angiotensin II receptor (359 aa).

Residues 1 to 25 (MILNSSTEDGIKRIQDDCPKAGRHN) lie on the Extracellular side of the membrane. N-linked (GlcNAc...) asparagine glycosylation occurs at Asn-4. Positions 15 and 17 each coordinate angiotensin II. Disulfide bonds link Cys-18–Cys-274 and Cys-101–Cys-180. Residues 26 to 55 (YIFIMIPTLYSIIFVVGLFGNSLVVIVIYF) traverse the membrane as a helical segment. Over 56 to 61 (YMKLKT) the chain is Cytoplasmic. Residues 62 to 89 (VASVFLLNLALADLCFLLTLPLWAVYTA) traverse the membrane as a helical segment. The Extracellular portion of the chain corresponds to 90 to 98 (MEYRWPFGN). The helical transmembrane segment at 99–125 (YLCKIASGSVSFNLYASVFLLTCLSID) threads the bilayer. Topologically, residues 126–141 (RYLAIVHPMKSRLRRT) are cytoplasmic. Residues 142 to 165 (MLVAKVTCIIIWLLAGLASLPTII) form a helical membrane-spanning segment. Residues 166–190 (HRNVFFIENTNITVCAFHYESQNST) are Extracellular-facing. Arg-167 is a binding site for angiotensin II. A glycan (N-linked (GlcNAc...) asparagine) is linked at Asn-176. Residues Phe-182, His-183, and Tyr-184 each coordinate angiotensin II. Asn-188 carries an N-linked (GlcNAc...) asparagine glycan. Residues 191 to 216 (LPVGLGLTKNILGFLFPFLIILTSYT) traverse the membrane as a helical segment. Lys-199 serves as a coordination point for angiotensin II. The Cytoplasmic portion of the chain corresponds to 217-239 (LIWKTLKKAYEIQKNKPRKDDIF). Residues 240–268 (KIILAIVLFFFFSWVPHQIFTFMDVLIQL) form a helical membrane-spanning segment. Residues 269–278 (GLIRDCKIED) are Extracellular-facing. The chain crosses the membrane as a helical span at residues 279–304 (IVDTAMPITICLAYFNNCLNPPFYGF). Residues 305–359 (LGKKFKKYFLQLLKYIPPKAKSHSNLSTKMSTLSYRPSENGNSSTKKPAPCTEVE) are Cytoplasmic-facing. A compositionally biased stretch (polar residues) spans 335–350 (STLSYRPSENGNSSTK). Residues 335-359 (STLSYRPSENGNSSTKKPAPCTEVE) are disordered. Cys-355 carries the S-palmitoyl cysteine lipid modification.

It belongs to the G-protein coupled receptor 1 family. In terms of assembly, interacts with MAS1. Interacts with ARRB1. Interacts with FLNA (via filamin repeat 21); increases PKA-mediated phosphorylation of FLNA. Post-translationally, C-terminal Ser or Thr residues may be phosphorylated.

Its subcellular location is the cell membrane. Functionally, receptor for angiotensin II, a vasoconstricting peptide, which acts as a key regulator of blood pressure and sodium retention by the kidney. The activated receptor in turn couples to G-alpha proteins G(q) (GNAQ, GNA11, GNA14 or GNA15) and thus activates phospholipase C and increases the cytosolic Ca(2+) concentrations, which in turn triggers cellular responses such as stimulation of protein kinase C. The polypeptide is Type-1 angiotensin II receptor (AGTR1) (Ovis aries (Sheep)).